The following is a 636-amino-acid chain: 1,4-alpha-glucan branching enzyme GlgB (636 aa).

Catalysis depends on Asp309, which acts as the Nucleophile. Glu362 (proton donor) is an active-site residue.

The protein belongs to the glycosyl hydrolase 13 family. GlgB subfamily. In terms of assembly, monomer.

It carries out the reaction Transfers a segment of a (1-&gt;4)-alpha-D-glucan chain to a primary hydroxy group in a similar glucan chain.. It functions in the pathway glycan biosynthesis; glycogen biosynthesis. In terms of biological role, catalyzes the formation of the alpha-1,6-glucosidic linkages in glycogen by scission of a 1,4-alpha-linked oligosaccharide from growing alpha-1,4-glucan chains and the subsequent attachment of the oligosaccharide to the alpha-1,6 position. The polypeptide is 1,4-alpha-glucan branching enzyme GlgB (Aromatoleum aromaticum (strain DSM 19018 / LMG 30748 / EbN1) (Azoarcus sp. (strain EbN1))).